Consider the following 265-residue polypeptide: DNA-binding dual transcriptional regulator Rns (265 aa).

Residues H20 and R75 each coordinate decanoate. The HTH araC/xylS-type domain maps to 164–261; sequence DKVRNLIEKD…GVTPKQFFTY (98 aa). 2 DNA-binding regions (H-T-H motif) span residues 181–202 and 228–251; these read GIIA…ESEN and ISQI…NKHY.

In terms of assembly, homodimer; each subunit binds one decanoate molecule.

It localises to the cytoplasm. Its activity is regulated as follows. Rns-dependent expression of pilins and outer membrane proteins CexE-alpha and CexE-epsilon are inhibited in vivo by decanoic acid (decanoate); has no effect on expression of DnaK or flagellins. Decanoate relieves Rns-dependent repression of nlpA. A transcription factor required for the expression of the CS1 and CS2 adhesins of enterotoxigenic E.coli. Required for expression of pilins and some outer membrane lipoproteins. Represses expression of nlpA. The protein is DNA-binding dual transcriptional regulator Rns of Escherichia coli.